The following is a 294-amino-acid chain: Protoheme IX farnesyltransferase (294 aa).

Transmembrane regions (helical) follow at residues 13–33, 35–55, 84–104, 107–127, 132–152, 162–182, 208–228, 229–249, and 264–284; these read IIFG…KGVI, YPLF…GCVF, ISLI…YAAA, LAMQ…SLYM, VYGT…GYCA, LILL…IAIF, IILY…SGYA, GYKY…MALS, and FIFS…DPHV.

It belongs to the UbiA prenyltransferase family. Protoheme IX farnesyltransferase subfamily.

Its subcellular location is the cell inner membrane. The catalysed reaction is heme b + (2E,6E)-farnesyl diphosphate + H2O = Fe(II)-heme o + diphosphate. It participates in porphyrin-containing compound metabolism; heme O biosynthesis; heme O from protoheme: step 1/1. Its function is as follows. Converts heme B (protoheme IX) to heme O by substitution of the vinyl group on carbon 2 of heme B porphyrin ring with a hydroxyethyl farnesyl side group. The polypeptide is Protoheme IX farnesyltransferase (Photorhabdus laumondii subsp. laumondii (strain DSM 15139 / CIP 105565 / TT01) (Photorhabdus luminescens subsp. laumondii)).